Consider the following 342-residue polypeptide: Aristolochene synthase (342 aa).

Residues D115, N244, S248, and E252 each coordinate Mg(2+). (2E,6E)-farnesyl diphosphate is bound by residues R340 and Y341.

This sequence belongs to the terpene synthase family. Homodimer. It depends on Mg(2+) as a cofactor.

The enzyme catalyses (2E,6E)-farnesyl diphosphate = (+)-aristolochene + diphosphate. It functions in the pathway sesquiterpene biosynthesis; aristolochene biosynthesis; aristolochene from farnesyl diphosphate: step 1/1. Functionally, aristolochene synthase; part of the gene cluster that mediates the biosynthesis of PR-toxin, a bicyclic sesquiterpene belonging to the eremophilane class and acting as a mycotoxin. The first step of the pathway is catalyzed by the aristolochene synthase which performs the cyclization of trans,trans-farnesyl diphosphate (FPP) to the bicyclic sesquiterpene aristolochene. Following the formation of aristolochene, the non-oxygenated aristolochene is converted to the trioxygenated intermediate eremofortin B, via 7-epi-neopetasone. This conversion appears to involve three enzymes, a hydroxysterol oxidase-like enzyme, the quinone-oxidase prx3 that forms the quinone-type-structure in the bicyclic nucleus of aristolochene with the C8-oxo group and the C-3 hydroxyl group, and the P450 monooxygenase ORF6 that introduces the epoxide at the double bond between carbons 1 and 2. No monoxy or dioxy-intermediates have been reported to be released to the broth, so these three early oxidative reactions may be coupled together. Eremofortin B is further oxidized by another P450 monooxygenase, that introduces a second epoxide between carbons 7 and 11 prior to acetylation to eremofortin A by the acetyltransferase ORF8. The second epoxidation may be performed by a second P450 monooxygenase. After the acetylation step, eremofortin A is converted to eremofortin C and then to PR-toxin. First the conversion of eremofortin A to eremofortin C proceeds by oxidation of the side chain of the molecule at C-12 and is catalyzed by the short-chain oxidoreductase prx1. The cytochrome P450 monooxygenase ORF5 also plays a role in this step. The primary alcohol formed at C-12 is finally oxidized by the short-chain alcohol dehydrogenase prx4 that forms PR-toxin. The chain is Aristolochene synthase from Penicillium roqueforti (strain FM164).